A 563-amino-acid polypeptide reads, in one-letter code: PHD finger protein EHD3 (563 aa).

Residues 1-46 are disordered; sequence MGSQNRPPPPRKRQPPPPEDHLVTYKRRRSKETQPLPLMANGANSK. PHD-type zinc fingers lie at residues 296 to 348, 420 to 472, and 474 to 524; these read LCPC…CSFK, SNLC…CWYC, and SCLC…CKIR.

In terms of assembly, interacts with TRX1. Expressed in shoot apical meristem and leaves.

It is found in the nucleus. In terms of biological role, probable transcription factor involved in the regulation of floral induction under long day (LD) conditions. Promotes photoperiodic flowering by repressing GHD7, a major floral repressor. Seems to function independently of HD1. This chain is PHD finger protein EHD3, found in Oryza sativa subsp. japonica (Rice).